The sequence spans 264 residues: Spermidine/putrescine transport system permease protein PotC (264 aa).

Topologically, residues 1 to 7 (MIGRLLR) are cytoplasmic. Residues 8-27 (GGFMTAIYAYLYIPIIILIV) form a helical membrane-spanning segment. Residues 28–65 (NSFNSSRFGINWQGFTTKWYSLLMNNDSLLQAAQHSLT) are Periplasmic-facing. The 189-residue stretch at 60-248 (AQHSLTMAVF…VLSLVMVIAS (189 aa)) folds into the ABC transmembrane type-1 domain. Residues 66 to 85 (MAVFSATFATLIGSLTAVAL) form a helical membrane-spanning segment. Over 86–100 (YRYRFRGKPFVSGML) the chain is Cytoplasmic. The helical transmembrane segment at 101–120 (FVVMMSPDIVMAISLLVLFM) threads the bilayer. Residues 121–128 (LLGIQLGF) lie on the Periplasmic side of the membrane. The helical transmembrane segment at 129-148 (WSLLFSHITFCLPFVVVTVY) threads the bilayer. At 149–176 (SRLKGFDVRMLEAAKDLGASEFTILRKI) the chain is on the cytoplasmic side. A helical transmembrane segment spans residues 177 to 196 (ILPLAMPAVAAGWVLSFTLS). Over 197-231 (MDDVVVSSFVTGPSYEILPLKIYSMVKVGVSPEVN) the chain is Periplasmic. The helical transmembrane segment at 232–251 (ALATILLVLSLVMVIASQLI) threads the bilayer. Topologically, residues 252–264 (ARDKTKGNTGDVK) are cytoplasmic.

This sequence belongs to the binding-protein-dependent transport system permease family. CysTW subfamily.

It localises to the cell inner membrane. Its function is as follows. Required for the activity of the bacterial periplasmic transport system of putrescine and spermidine. This is Spermidine/putrescine transport system permease protein PotC (potC) from Escherichia coli O157:H7.